Here is a 305-residue protein sequence, read N- to C-terminus: MVDKLTHLKQLEAESIHIIREVAAEFDNPVMLYSIGKDSAVMLHLARKAFFPGKLPFPVMHVDTRWKFQEMYRFRDRMVEEMGLDLITHVNPDGVAQGINPFTHGSAKHTDVMKTEGLKQALDKYGFDAAFGGARRDEEKSRAKERVYSFRDSKHRWDPKNQRPELWNIYNGKVKKGESIRVFPLSNWTELDIWQYIYLEGIPIVPLYFAAEREVIEKNGTLIMIDDERILEHLSDEEKARIEKRMVRFRTLGCYPLTGAVESSATTLPEIIQEMLLTRTSERQGRVIDHDQAGSMEEKKRQGYF.

This sequence belongs to the PAPS reductase family. CysD subfamily. Heterodimer composed of CysD, the smaller subunit, and CysN.

The enzyme catalyses sulfate + ATP + H(+) = adenosine 5'-phosphosulfate + diphosphate. The protein operates within sulfur metabolism; hydrogen sulfide biosynthesis; sulfite from sulfate: step 1/3. In terms of biological role, with CysN forms the ATP sulfurylase (ATPS) that catalyzes the adenylation of sulfate producing adenosine 5'-phosphosulfate (APS) and diphosphate, the first enzymatic step in sulfur assimilation pathway. APS synthesis involves the formation of a high-energy phosphoric-sulfuric acid anhydride bond driven by GTP hydrolysis by CysN coupled to ATP hydrolysis by CysD. This is Sulfate adenylyltransferase subunit 2 from Pseudomonas aeruginosa (strain LESB58).